The chain runs to 490 residues: ATP synthase subunit beta, chloroplastic (490 aa).

Phosphothreonine is present on Thr6. At Ser13 the chain carries Phosphoserine. Residue 172–179 coordinates ATP; the sequence is GGAGVGKT.

Belongs to the ATPase alpha/beta chains family. F-type ATPases have 2 components, CF(1) - the catalytic core - and CF(0) - the membrane proton channel. CF(1) has five subunits: alpha(3), beta(3), gamma(1), delta(1), epsilon(1). CF(0) has four main subunits: a(1), b(1), b'(1) and c(9-12).

It localises to the plastid. The protein localises to the chloroplast thylakoid membrane. The catalysed reaction is ATP + H2O + 4 H(+)(in) = ADP + phosphate + 5 H(+)(out). Its function is as follows. Produces ATP from ADP in the presence of a proton gradient across the membrane. The catalytic sites are hosted primarily by the beta subunits. The protein is ATP synthase subunit beta, chloroplastic of Aethionema grandiflorum (Persian stone-cress).